The following is a 533-amino-acid chain: D-3-phosphoglycerate dehydrogenase (533 aa).

Residue Ala2 is modified to N-acetylalanine. Position 14 is a phosphoserine (Ser14). Lys21 carries the N6-acetyllysine; alternate modification. Residue Lys21 forms a Glycyl lysine isopeptide (Lys-Gly) (interchain with G-Cter in SUMO1); alternate linkage. Residue Lys21 forms a Glycyl lysine isopeptide (Lys-Gly) (interchain with G-Cter in SUMO2); alternate linkage. Residue Lys58 is modified to N6-acetyllysine. Residues Thr78, 155–156 (RI), Asp175, Thr207, 234–236 (CAR), and Asp260 contribute to the NAD(+) site. Thr78 is subject to Phosphothreonine. Residue Arg236 is part of the active site. Glu265 is an active-site residue. His283 serves as the catalytic Proton donor. Position 283 to 286 (283 to 286 (HLGA)) interacts with NAD(+).

It belongs to the D-isomer specific 2-hydroxyacid dehydrogenase family. As to quaternary structure, homotetramer. As to expression, liver, kidney, brain, testis.

The enzyme catalyses (2R)-3-phosphoglycerate + NAD(+) = 3-phosphooxypyruvate + NADH + H(+). It participates in amino-acid biosynthesis; L-serine biosynthesis; L-serine from 3-phospho-D-glycerate: step 1/3. Catalyzes the reversible oxidation of 3-phospho-D-glycerate to 3-phosphonooxypyruvate, the first step of the phosphorylated L-serine biosynthesis pathway. Does not catalyze the reversible oxidation of 2-hydroxyglutarate to 2-oxoglutarate and the reversible oxidation of (S)-malate to oxaloacetate. The sequence is that of D-3-phosphoglycerate dehydrogenase (Phgdh) from Rattus norvegicus (Rat).